The sequence spans 65 residues: Prokaryotic ubiquitin-like protein Pup (65 aa).

The span at 1-14 (MSGHEQQRPSRREE) shows a compositional bias: basic and acidic residues. The segment at 1-35 (MSGHEQQRPSRREEDVEETPVVPAQAGAQAKESDA) is disordered. Residues 21 to 59 (VVPAQAGAQAKESDADVDALLDEIDEVLESNSEEFVRGF) form an ARC ATPase binding region. The stretch at 26-49 (AGAQAKESDADVDALLDEIDEVLE) forms a coiled coil. At glutamine 65 the chain carries Deamidated glutamine. Residue glutamine 65 forms an Isoglutamyl lysine isopeptide (Gln-Lys) (interchain with K-? in acceptor proteins) linkage.

It belongs to the prokaryotic ubiquitin-like protein family. In terms of assembly, strongly interacts with the proteasome-associated ATPase ARC through a hydrophobic interface; the interacting region of Pup lies in its C-terminal half. There is one Pup binding site per ARC hexamer ring. In terms of processing, is modified by deamidation of its C-terminal glutamine to glutamate by the deamidase Dop, a prerequisite to the subsequent pupylation process.

It functions in the pathway protein degradation; proteasomal Pup-dependent pathway. Functionally, protein modifier that is covalently attached to lysine residues of substrate proteins, thereby targeting them for proteasomal degradation. The tagging system is termed pupylation. The chain is Prokaryotic ubiquitin-like protein Pup from Kineococcus radiotolerans (strain ATCC BAA-149 / DSM 14245 / SRS30216).